A 968-amino-acid chain; its full sequence is Probable transport protein MmpL2 (968 aa).

11 consecutive transmembrane segments (helical) span residues Phe22–Pro42, Val204–Ile224, Ile245–Thr265, Ala297–Ala317, Pro328–Leu348, Trp378–Pro398, Tyr763–Ile783, Val787–Leu807, Ile815–Val835, Thr866–Phe886, and Arg890–Val910.

This sequence belongs to the resistance-nodulation-cell division (RND) (TC 2.A.6) family. MmpL subfamily.

It localises to the cell membrane. The sequence is that of Probable transport protein MmpL2 (mmpL2) from Mycobacterium tuberculosis (strain CDC 1551 / Oshkosh).